Here is a 60-residue protein sequence, read N- to C-terminus: Large ribosomal subunit protein uL30 (60 aa).

The protein belongs to the universal ribosomal protein uL30 family. As to quaternary structure, part of the 50S ribosomal subunit.

This Saccharopolyspora erythraea (strain ATCC 11635 / DSM 40517 / JCM 4748 / NBRC 13426 / NCIMB 8594 / NRRL 2338) protein is Large ribosomal subunit protein uL30.